A 620-amino-acid polypeptide reads, in one-letter code: Sterile alpha motif domain-containing protein 15 (620 aa).

The disordered stretch occupies residues 1–394; that stretch reads MSEVSGDYNS…PNYPAGKDKL (394 aa). Basic and acidic residues-rich tracts occupy residues 62–83, 106–125, and 135–180; these read TRTR…DLQR, IDPE…KSVE, and TKSE…HFKS. The span at 181–191 shows a compositional bias: polar residues; that stretch reads TEQSGTEQPEQ. Basic residues predominate over residues 233–242; sequence RPLKASKKAQ. Over residues 261 to 270 the composition is skewed to acidic residues; sequence LLDDQEETQE. 4 stretches are compositionally biased toward basic and acidic residues: residues 271–286, 295–315, 323–337, and 347–382; these read ESIK…DRKP, KSSE…DKDP, FPKE…KTGD, and IQEK…KPES. Residues 480-543 form the SAM domain; it reads WSPERVAEWI…SYHTRVLLGI (64 aa). The segment covering 594 to 604 has biased composition (basic and acidic residues); that stretch reads EIKAEEKKEDA. The tract at residues 594–620 is disordered; sequence EIKAEEKKEDALPENSLEENEELYEAT. Over residues 609-620 the composition is skewed to acidic residues; it reads SLEENEELYEAT.

In Mus musculus (Mouse), this protein is Sterile alpha motif domain-containing protein 15 (Samd15).